Consider the following 152-residue polypeptide: Ribosome maturation factor RimP (152 aa).

The protein belongs to the RimP family.

The protein localises to the cytoplasm. Its function is as follows. Required for maturation of 30S ribosomal subunits. In Rubrobacter xylanophilus (strain DSM 9941 / JCM 11954 / NBRC 16129 / PRD-1), this protein is Ribosome maturation factor RimP.